The chain runs to 522 residues: Target of rapamycin complex 2 subunit MAPKAP1 (522 aa).

A2 carries the N-acetylalanine modification. The tract at residues A2–H184 is interaction with MAP3K2. Residues A2 to K267 are interaction with NBN. At T86 the chain carries Phosphothreonine. Residues S128, S186, S315, and S356 each carry the phosphoserine modification. The region spanning Q139–K267 is the CRIM domain. Residues L279 to R353 are SIN1-type RBD. Residues H382–E487 form the SIN1-type PH domain. R393 provides a ligand contact to a 1,2-diacyl-sn-glycero-3-phospho-(1D-myo-inositol-3,4,5-trisphosphate). T398 is subject to Phosphothreonine. Residues K428 and K464 each coordinate a 1,2-diacyl-sn-glycero-3-phospho-(1D-myo-inositol-3,4,5-trisphosphate). The tract at residues F468–Q522 is interaction with ATF2. Position 510 is a phosphoserine (S510).

Belongs to the SIN1 family. Component of the mechanistic target of rapamycin complex 2 (mTORC2), consisting in two heterotretramers composed of MTOR, MLST8, RICTOR and MAPKAP1/SIN1. The mTORC2 core complex associates with PRR5/PROTOR1 and/or PRR5L/PROTOR2. Contrary to mTORC1, mTORC2 does not bind to and is not sensitive to FKBP12-rapamycin. Interacts with MAP3K2. Interacts with ATF2. Interacts with MAPK8. Interacts with GTP-bound HRAS and KRAS; inhibiting their activity. Interacts with IFNAR2. Post-translationally, phosphorylation at Ser-128 by PKC promotes relocalization to the perinuclear region, where the mTORC2 complex specifically mediates phosphorylation of SGK1. Phosphorylated at Thr-86 by AKT1 or RPS6KB1 in the presence of growth factors; the effect of this phosphorylation is however unclear. According to two studies, phosphorylation at Thr-86 by AKT1 is part of a positive feedback loop that increases mTORC2 activation. According to another study, phosphorylation at Thr-86 and Thr-398 by RPS6KB1 promotes dissociation from the mTORC2 complex, leading to inhibit mTORC2 signaling.

It localises to the cell membrane. The protein resides in the endoplasmic reticulum membrane. The protein localises to the early endosome membrane. It is found in the late endosome membrane. Its subcellular location is the lysosome membrane. It localises to the golgi apparatus membrane. The protein resides in the mitochondrion outer membrane. The protein localises to the cytoplasm. It is found in the perinuclear region. Its subcellular location is the nucleus. Phosphatidylinositol 3,4,5-trisphosphate (PI(3,4,5)P3) promotes MTOR activation by relieving MAPKAP1/SIN1-mediated inhibition of MTOR that takes place in absence of PI(3,4,5)P3. Its function is as follows. Component of the mechanistic target of rapamycin complex 2 (mTORC2), which transduces signals from growth factors to pathways involved in proliferation, cytoskeletal organization, lipogenesis and anabolic output. In response to growth factors, mTORC2 phosphorylates and activates AGC protein kinase family members, including AKT (AKT1, AKT2 and AKT3), PKC (PRKCA, PRKCB and PRKCE) and SGK1. In contrast to mTORC1, mTORC2 is nutrient-insensitive. Within the mTORC2 complex, MAPKAP1/SIN1 acts as a substrate adapter which recognizes and binds AGC protein kinase family members for phosphorylation by MTOR. mTORC2 plays a critical role in AKT1 activation by mediating phosphorylation of different sites depending on the context, such as 'Thr-450', 'Ser-473', 'Ser-477' or 'Thr-479', facilitating the phosphorylation of the activation loop of AKT1 on 'Thr-308' by PDPK1/PDK1 which is a prerequisite for full activation. mTORC2 catalyzes the phosphorylation of SGK1 at 'Ser-422' and of PRKCA on 'Ser-657'. The mTORC2 complex also phosphorylates various proteins involved in insulin signaling, such as FBXW8 and IGF2BP1. mTORC2 acts upstream of Rho GTPases to regulate the actin cytoskeleton, probably by activating one or more Rho-type guanine nucleotide exchange factors. mTORC2 promotes the serum-induced formation of stress-fibers or F-actin. MAPKAP1 inhibits MAP3K2 by preventing its dimerization and autophosphorylation. Inhibits HRAS and KRAS independently of mTORC2 complex. Enhances osmotic stress-induced phosphorylation of ATF2 and ATF2-mediated transcription. Involved in ciliogenesis, regulates cilia length through its interaction with CCDC28B independently of mTORC2 complex. The protein is Target of rapamycin complex 2 subunit MAPKAP1 (MAPKAP1) of Pongo abelii (Sumatran orangutan).